Here is a 410-residue protein sequence, read N- to C-terminus: Serine/threonine transporter SstT (410 aa).

9 helical membrane passes run 11–31 (VSLVKRIIIGIIIGITLAVTV), 45–65 (FVGALKAVAPVLVFFLVISAI), 79–99 (ILILYGFSTFLASLTAVVASF), 138–158 (ALLNANYIGILTWAVLLGIAL), 179–199 (IVTWVINFAPIGIMGLVFDAI), 214–234 (LAVLLGTMCFVAFVMNPLIVF), 285–305 (ISIPLGATINMAGAAVTISVL), 327–347 (VLSAIAAAGASGVAGGSLLLI), and 353–373 (LFGIPNDIAMQVVGVGFIIGV).

Belongs to the dicarboxylate/amino acid:cation symporter (DAACS) (TC 2.A.23) family.

Its subcellular location is the cell membrane. It catalyses the reaction L-serine(in) + Na(+)(in) = L-serine(out) + Na(+)(out). The enzyme catalyses L-threonine(in) + Na(+)(in) = L-threonine(out) + Na(+)(out). Its function is as follows. Involved in the import of serine and threonine into the cell, with the concomitant import of sodium (symport system). The polypeptide is Serine/threonine transporter SstT (Geobacillus thermodenitrificans (strain NG80-2)).